A 310-amino-acid polypeptide reads, in one-letter code: Zinc finger protein 42 homolog (310 aa).

A compositionally biased stretch (basic residues) spans 1 to 15; it reads MSQQLKKRAKTRHQK. Positions 1–35 are disordered; that stretch reads MSQQLKKRAKTRHQKGLGGRAPSGAKPRQGKSSQD. 4 consecutive C2H2-type zinc fingers follow at residues 188-212, 217-239, 245-269, and 275-299; these read IACP…LLIH, HVCA…FLVH, FRCT…VRIH, and FVCP…ILTH. Residues Lys-231 and Lys-233 each participate in a glycyl lysine isopeptide (Lys-Gly) (interchain with G-Cter in ubiquitin) cross-link.

This sequence belongs to the krueppel C2H2-type zinc-finger protein family. In terms of processing, polyubiquitinated by RNF12, leading to proteasomal degradation. As to expression, expressed in kidney, epidermal keratinocytes, prostate epithelial cells, bronchial and small airway lung epithelial cells (at protein level). Expressed in malignant kidney and several carcinoma cell lines (at protein level). Expressed in embryonic stem cells, kidney, epidermal keratinocytes, prostate epithelial cells, bronchial and small airway lung epithelial cells. Expressed in embryonal carcinomas, seminomas, malignant kidney and several carcinoma cell lines.

The protein localises to the nucleus. Its function is as follows. Involved in the reprogramming of X-chromosome inactivation during the acquisition of pluripotency. Required for efficient elongation of TSIX, a non-coding RNA antisense to XIST. Binds DXPas34 enhancer within the TSIX promoter. Involved in ES cell self-renewal. The chain is Zinc finger protein 42 homolog (ZFP42) from Homo sapiens (Human).